Consider the following 728-residue polypeptide: 1,4-alpha-glucan branching enzyme GlgB (728 aa).

Residue D405 is the Nucleophile of the active site. E458 functions as the Proton donor in the catalytic mechanism.

Belongs to the glycosyl hydrolase 13 family. GlgB subfamily. Monomer.

It catalyses the reaction Transfers a segment of a (1-&gt;4)-alpha-D-glucan chain to a primary hydroxy group in a similar glucan chain.. The protein operates within glycan biosynthesis; glycogen biosynthesis. Catalyzes the formation of the alpha-1,6-glucosidic linkages in glycogen by scission of a 1,4-alpha-linked oligosaccharide from growing alpha-1,4-glucan chains and the subsequent attachment of the oligosaccharide to the alpha-1,6 position. This is 1,4-alpha-glucan branching enzyme GlgB from Escherichia coli O6:K15:H31 (strain 536 / UPEC).